The primary structure comprises 196 residues: MAKRFGAYSRETGETRVAVEITIDGKGNAAIDTGFGFADHMLNLLAFWAGFDLNLTCRGDLEVDAHHTLEDVAICLGEAFRQALGERVGIERVGDARVPMDEALCDVVVDLSGRPYLVYREDVLPPVIAGEEKDLWREFFKSLAISARMNLHIHFVYGQNGHHLVEAAFKALGLALRRATAAHGSSRVPSTKGSLD.

Belongs to the imidazoleglycerol-phosphate dehydratase family.

The protein localises to the cytoplasm. It carries out the reaction D-erythro-1-(imidazol-4-yl)glycerol 3-phosphate = 3-(imidazol-4-yl)-2-oxopropyl phosphate + H2O. It participates in amino-acid biosynthesis; L-histidine biosynthesis; L-histidine from 5-phospho-alpha-D-ribose 1-diphosphate: step 6/9. The polypeptide is Imidazoleglycerol-phosphate dehydratase (Solidesulfovibrio magneticus (strain ATCC 700980 / DSM 13731 / RS-1) (Desulfovibrio magneticus)).